The following is a 442-amino-acid chain: QWRF motif-containing protein 6 (442 aa).

2 disordered regions span residues 1 to 144 (MEAK…LSQQ) and 221 to 240 (FSRL…ADTK). Over residues 57–66 (KQHHLQHHQI) the composition is skewed to basic residues. Over residues 80–89 (KMADGDENRS) the composition is skewed to basic and acidic residues. Positions 264 to 267 (QWRF) match the QWRF motif motif.

The protein belongs to the QWRF family.

The chain is QWRF motif-containing protein 6 (QWRF6) from Arabidopsis thaliana (Mouse-ear cress).